Consider the following 480-residue polypeptide: tRNA-2-methylthio-N(6)-dimethylallyladenosine synthase (480 aa).

In terms of domain architecture, MTTase N-terminal spans 2–118 (NRVHIKTYGC…VPGYLDNLRA (117 aa)). [4Fe-4S] cluster-binding residues include C11, C47, and C81. Residues 145-169 (DHLLPQDSDSDSQPSTLNSQLRGAA) are disordered. Positions 149 to 159 (PQDSDSDSQPS) are enriched in low complexity. The Radical SAM core domain maps to 171 to 405 (PPPQITAFVS…LELLRQNSER (235 aa)). Residues C185, C189, and C192 each contribute to the [4Fe-4S] cluster site. The region spanning 408 to 470 (ALLLDTVEEV…VSTLYGELML (63 aa)) is the TRAM domain.

This sequence belongs to the methylthiotransferase family. MiaB subfamily. In terms of assembly, monomer. [4Fe-4S] cluster is required as a cofactor.

The protein localises to the cytoplasm. It catalyses the reaction N(6)-dimethylallyladenosine(37) in tRNA + (sulfur carrier)-SH + AH2 + 2 S-adenosyl-L-methionine = 2-methylsulfanyl-N(6)-dimethylallyladenosine(37) in tRNA + (sulfur carrier)-H + 5'-deoxyadenosine + L-methionine + A + S-adenosyl-L-homocysteine + 2 H(+). Its function is as follows. Catalyzes the methylthiolation of N6-(dimethylallyl)adenosine (i(6)A), leading to the formation of 2-methylthio-N6-(dimethylallyl)adenosine (ms(2)i(6)A) at position 37 in tRNAs that read codons beginning with uridine. This Opitutus terrae (strain DSM 11246 / JCM 15787 / PB90-1) protein is tRNA-2-methylthio-N(6)-dimethylallyladenosine synthase.